A 284-amino-acid chain; its full sequence is Short chain dehydrogenase/reductase AacuD (284 aa).

V37 lines the NADP(+) pocket. Active-site proton donor residues include S166 and Y180. NADP(+)-binding residues include Y180, K184, and T215. Catalysis depends on K184, which acts as the Lowers pKa of active site Tyr.

It belongs to the short-chain dehydrogenases/reductases (SDR) family.

It functions in the pathway secondary metabolite biosynthesis. Short chain dehydrogenase/reductase; part of the gene cluster that mediates the biosynthesis of the tetrahydroxanthone dimer secalonic acid D. The pathway begins with the synthesis of atrochrysone thioester by the polyketide synthase AacuL. The atrochrysone carboxyl ACP thioesterase AacuM then breaks the thioester bond and releases the atrochrysone carboxylic acid from AacuL. Atrochrysone carboxylic acid is decarboxylated by the decarboxylase AacuI, and oxidized by the anthrone oxygenase AacuG to yield emodin. Emodin is then reduced to emodin hydroquinone by a yet unidentified oxidoreductase. A-ring reduction by the short chain dehydrogenase AacuN, dehydration by the scytalone dehydratase-like protein AacuK and probable spontaneous re-oxidation, results in overall deoxygenation to chrysophanol. Baeyer-Villiger oxidation by the Baeyer-Villiger monooxygenase (BVMO) AacuH then yields monodictyphenone. Monodictyphenone is transformed into compounds with the tetrahydroxanthone skeleton via methylesterification by the methyltransferase AacuQ, followed by the action of the flavin-dependent monooxygenase AacuC, the isomerase AacuP, and the short chain dehydrogenase/reductase AacuF or AacuD. AacuF and AacuD should accept the same compound as a substrate but perform the ketoreduction with a different stereoselectivity, thus yielding blennolides B and A, respectively. In the final step of the biosynthesis, the cytochrome P450 monooxygenase AacuE accepts blennolide B and/or blennolide A to conduct the dimerization reaction to furnish the tetrahydroxanthone dimers, secalonic acids D, B, and F. This chain is Short chain dehydrogenase/reductase AacuD, found in Aspergillus aculeatus (strain ATCC 16872 / CBS 172.66 / WB 5094).